The primary structure comprises 298 residues: 4-hydroxy-tetrahydrodipicolinate synthase (298 aa).

Threonine 45 serves as a coordination point for pyruvate. Tyrosine 133 functions as the Proton donor/acceptor in the catalytic mechanism. Lysine 161 (schiff-base intermediate with substrate) is an active-site residue. Isoleucine 203 lines the pyruvate pocket.

This sequence belongs to the DapA family. In terms of assembly, homotetramer; dimer of dimers.

It localises to the cytoplasm. The enzyme catalyses L-aspartate 4-semialdehyde + pyruvate = (2S,4S)-4-hydroxy-2,3,4,5-tetrahydrodipicolinate + H2O + H(+). It functions in the pathway amino-acid biosynthesis; L-lysine biosynthesis via DAP pathway; (S)-tetrahydrodipicolinate from L-aspartate: step 3/4. Functionally, catalyzes the condensation of (S)-aspartate-beta-semialdehyde [(S)-ASA] and pyruvate to 4-hydroxy-tetrahydrodipicolinate (HTPA). The sequence is that of 4-hydroxy-tetrahydrodipicolinate synthase from Wigglesworthia glossinidia brevipalpis.